The chain runs to 432 residues: Anaerobic glycerol-3-phosphate dehydrogenase subunit B (432 aa).

This sequence belongs to the anaerobic G-3-P dehydrogenase subunit B family. In terms of assembly, composed of a catalytic GlpA/B dimer and of membrane bound GlpC. It depends on FMN as a cofactor.

The catalysed reaction is a quinone + sn-glycerol 3-phosphate = dihydroxyacetone phosphate + a quinol. Its pathway is polyol metabolism; glycerol degradation via glycerol kinase pathway; glycerone phosphate from sn-glycerol 3-phosphate (anaerobic route): step 1/1. In terms of biological role, conversion of glycerol 3-phosphate to dihydroxyacetone. Uses fumarate or nitrate as electron acceptor. The protein is Anaerobic glycerol-3-phosphate dehydrogenase subunit B of Haemophilus influenzae (strain 86-028NP).